The chain runs to 190 residues: MTSSIHELSDNIGSHEKQEQRDSHFQPPIPSARNYESIVTSLVYSDPGTTNSMAPGQYPYPDPYYRSIFAPPPQPYTGVHLQLMGVQQQGVPLPSDAVEEPVFVNAKQYHGILRRRQSRARLESQNKVIKSRKPYLHESRHLHAIRRPRGCGGRFLNAKKEDEHHEDSSHEEKSNLSAGKSAMAASSGTS.

The segment at 1-33 (MTSSIHELSDNIGSHEKQEQRDSHFQPPIPSAR) is disordered. Basic and acidic residues predominate over residues 7 to 24 (ELSDNIGSHEKQEQRDSH). The Subunit association domain (SAD) motif lies at 103 to 126 (FVNAKQYHGILRRRQSRARLESQN). The segment at residues 133 to 158 (KPYLHESRHLHAIRRPRGCGGRFLNA) is a DNA-binding region (NFYA/HAP2-type). The disordered stretch occupies residues 147 to 190 (RPRGCGGRFLNAKKEDEHHEDSSHEEKSNLSAGKSAMAASSGTS). Residues 158-174 (AKKEDEHHEDSSHEEKS) show a composition bias toward basic and acidic residues. The segment covering 177 to 190 (SAGKSAMAASSGTS) has biased composition (low complexity).

Belongs to the NFYA/HAP2 subunit family. As to quaternary structure, heterotrimeric transcription factor composed of three components, NF-YA, NF-YB and NF-YC. NF-YB and NF-YC must interact and dimerize for NF-YA association and DNA binding.

The protein resides in the nucleus. In terms of biological role, stimulates the transcription of various genes by recognizing and binding to a CCAAT motif in promoters. The sequence is that of Nuclear transcription factor Y subunit A-7 (NFYA7) from Arabidopsis thaliana (Mouse-ear cress).